The following is a 452-amino-acid chain: Protein disulfide-isomerase TMX3 (452 aa).

A signal peptide spans 1-26; that stretch reads MAAAGLCFILAIVSSTSLLASVPVSA. The Thioredoxin domain maps to 27–128; it reads LVEDLDDSFK…KEDIVEFANR (102 aa). The Lumenal segment spans residues 27 to 375; the sequence is LVEDLDDSFK…TVVSVFKSSP (349 aa). Residues Cys53 and Cys56 each act as nucleophile in the active site. Cys53 and Cys56 are joined by a disulfide. 2 N-linked (GlcNAc...) asparagine glycosylation sites follow: Asn258 and Asn313. The helical transmembrane segment at 376–396 threads the bilayer; it reads LLGCFLFGLPLGVISIMCYGI. At 397–452 the chain is on the cytoplasmic side; that stretch reads CTADTEDGSEEMTRKDVIDQNASDEGSDEEEEKGREITDVSDEDQQEKDFMEKKID. The segment at 405–452 is disordered; that stretch reads SEEMTRKDVIDQNASDEGSDEEEEKGREITDVSDEDQQEKDFMEKKID. Positions 443 to 452 are enriched in basic and acidic residues; it reads EKDFMEKKID. The short motif at 449–452 is the Di-lysine motif element; it reads KKID.

It belongs to the protein disulfide isomerase family.

It localises to the endoplasmic reticulum membrane. The enzyme catalyses Catalyzes the rearrangement of -S-S- bonds in proteins.. Its function is as follows. Probable disulfide isomerase, which participates in the folding of proteins containing disulfide bonds. May act as a dithiol oxidase. Acts as a regulator of endoplasmic reticulum-mitochondria contact sites via its ability to regulate redox signals. The sequence is that of Protein disulfide-isomerase TMX3 (tmx3) from Xenopus laevis (African clawed frog).